The sequence spans 458 residues: Phosphoglucosamine mutase (458 aa).

Catalysis depends on Ser106, which acts as the Phosphoserine intermediate. Residues Ser106, Asp247, Asp249, and Asp251 each contribute to the Mg(2+) site. A Phosphoserine modification is found at Ser106.

The protein belongs to the phosphohexose mutase family. Requires Mg(2+) as cofactor. Activated by phosphorylation.

It catalyses the reaction alpha-D-glucosamine 1-phosphate = D-glucosamine 6-phosphate. Catalyzes the conversion of glucosamine-6-phosphate to glucosamine-1-phosphate. This chain is Phosphoglucosamine mutase, found in Chlamydia pneumoniae (Chlamydophila pneumoniae).